A 408-amino-acid polypeptide reads, in one-letter code: Dual-specificity RNA methyltransferase RlmN (408 aa).

Glutamate 122 functions as the Proton acceptor in the catalytic mechanism. One can recognise a Radical SAM core domain in the interval 128 to 369 (EEDRGTLCIS…NRAGYASPIR (242 aa)). Residues cysteine 135 and cysteine 380 are joined by a disulfide bond. [4Fe-4S] cluster is bound by residues cysteine 142, cysteine 146, and cysteine 149. S-adenosyl-L-methionine is bound by residues 206-207 (GE), serine 238, 260-262 (SLH), and asparagine 337. The active-site S-methylcysteine intermediate is the cysteine 380.

The protein belongs to the radical SAM superfamily. RlmN family. [4Fe-4S] cluster is required as a cofactor.

The protein localises to the cytoplasm. It catalyses the reaction adenosine(2503) in 23S rRNA + 2 reduced [2Fe-2S]-[ferredoxin] + 2 S-adenosyl-L-methionine = 2-methyladenosine(2503) in 23S rRNA + 5'-deoxyadenosine + L-methionine + 2 oxidized [2Fe-2S]-[ferredoxin] + S-adenosyl-L-homocysteine. The enzyme catalyses adenosine(37) in tRNA + 2 reduced [2Fe-2S]-[ferredoxin] + 2 S-adenosyl-L-methionine = 2-methyladenosine(37) in tRNA + 5'-deoxyadenosine + L-methionine + 2 oxidized [2Fe-2S]-[ferredoxin] + S-adenosyl-L-homocysteine. Its function is as follows. Specifically methylates position 2 of adenine 2503 in 23S rRNA and position 2 of adenine 37 in tRNAs. m2A2503 modification seems to play a crucial role in the proofreading step occurring at the peptidyl transferase center and thus would serve to optimize ribosomal fidelity. The chain is Dual-specificity RNA methyltransferase RlmN from Chelativorans sp. (strain BNC1).